Consider the following 410-residue polypeptide: Squalene synthase 1 (410 aa).

Position 2 is an N-acetylglycine (glycine 2). 2 helical membrane passes run serine 283 to tyrosine 303 and glutamine 387 to leucine 407.

The protein belongs to the phytoene/squalene synthase family. Requires Mg(2+) as cofactor. Mn(2+) is required as a cofactor. Expressed in all tissues analyzed (seedlings, cotyledons, inflorescences, siliques, leaves, stems and roots). Highly expressed in roots and pollen.

It localises to the endoplasmic reticulum membrane. The enzyme catalyses 2 (2E,6E)-farnesyl diphosphate + NADPH + H(+) = squalene + 2 diphosphate + NADP(+). It catalyses the reaction 2 (2E,6E)-farnesyl diphosphate + NADH + H(+) = squalene + 2 diphosphate + NAD(+). The protein operates within terpene metabolism; lanosterol biosynthesis; lanosterol from farnesyl diphosphate: step 1/3. The chain is Squalene synthase 1 from Arabidopsis thaliana (Mouse-ear cress).